The following is a 782-amino-acid chain: Phosphoribosylformylglycinamidine synthase subunit PurL (782 aa).

H48 is an active-site residue. ATP contacts are provided by Y51 and K90. E92 contributes to the Mg(2+) binding site. Residues 93–96 (SHNH) and R115 contribute to the substrate site. Catalysis depends on H94, which acts as the Proton acceptor. Residue D116 participates in Mg(2+) binding. Substrate is bound at residue Q239. Mg(2+) is bound at residue D267. 311 to 313 (ESQ) contributes to the substrate binding site. The ATP site is built by D525 and G562. Residue N563 participates in Mg(2+) binding. Substrate is bound at residue S565.

Belongs to the FGAMS family. As to quaternary structure, monomer. Part of the FGAM synthase complex composed of 1 PurL, 1 PurQ and 2 PurS subunits.

The protein localises to the cytoplasm. The enzyme catalyses N(2)-formyl-N(1)-(5-phospho-beta-D-ribosyl)glycinamide + L-glutamine + ATP + H2O = 2-formamido-N(1)-(5-O-phospho-beta-D-ribosyl)acetamidine + L-glutamate + ADP + phosphate + H(+). It participates in purine metabolism; IMP biosynthesis via de novo pathway; 5-amino-1-(5-phospho-D-ribosyl)imidazole from N(2)-formyl-N(1)-(5-phospho-D-ribosyl)glycinamide: step 1/2. Functionally, part of the phosphoribosylformylglycinamidine synthase complex involved in the purines biosynthetic pathway. Catalyzes the ATP-dependent conversion of formylglycinamide ribonucleotide (FGAR) and glutamine to yield formylglycinamidine ribonucleotide (FGAM) and glutamate. The FGAM synthase complex is composed of three subunits. PurQ produces an ammonia molecule by converting glutamine to glutamate. PurL transfers the ammonia molecule to FGAR to form FGAM in an ATP-dependent manner. PurS interacts with PurQ and PurL and is thought to assist in the transfer of the ammonia molecule from PurQ to PurL. In Nostoc sp. (strain PCC 7120 / SAG 25.82 / UTEX 2576), this protein is Phosphoribosylformylglycinamidine synthase subunit PurL.